The chain runs to 102 residues: uncharacterized protein (102 aa).

Positions 1 to 21 are disordered; it reads MAESVNENNNNAGDSNGSGRT. Residue asparagine 16 is glycosylated (N-linked (GlcNAc...) asparagine). Residues 24–44 form a helical membrane-spanning segment; the sequence is NTIVTIVVVVIVVTLIIILAT. Residues 49–102 form a disordered region; that stretch reads IGGSGKKVGAEEPATKLSSKSDDRNGGPNKKSPAKGSSKDDNNTEESVQSNLYG. The segment covering 56 to 73 has biased composition (basic and acidic residues); the sequence is VGAEEPATKLSSKSDDRN. N-linked (GlcNAc...) asparagine glycosylation occurs at asparagine 90. Residues 93–102 show a composition bias toward polar residues; sequence EESVQSNLYG.

It is found in the membrane. This is an uncharacterized protein from Encephalitozoon cuniculi (strain GB-M1) (Microsporidian parasite).